The following is a 744-amino-acid chain: Receptor-like serine/threonine-protein kinase ALE2 (744 aa).

Residues 1-19 (MRNFAMLLLLILLLHSLAS) form the signal peptide. The Extracellular segment spans residues 20–260 (FPICFARLFP…SQGIGFRTIA (241 aa)). Residues 59–68 (PAFSPNPSRI) are compositionally biased toward pro residues. A disordered region spans residues 59–79 (PAFSPNPSRIPPLRHKGHHRH). Positions 70–79 (PLRHKGHHRH) are enriched in basic residues. 5 N-linked (GlcNAc...) asparagine glycosylation sites follow: N87, N186, N204, N243, and N249. A helical transmembrane segment spans residues 261–281 (IIALSGFVLILVLVGAISIIV). At 282–744 (KWKKIGKSSN…HLWSGNGDWL (463 aa)) the chain is on the cytoplasmic side. Residues 349–619 (FSAKRVLGEG…GEVVQALKLI (271 aa)) form the Protein kinase domain. Residues 355–363 (LGEGGFGRV) and K377 each bind ATP. D470 acts as the Proton acceptor in catalysis. 2 disordered regions span residues 681 to 705 (EDMENRPHSASSIPRVGGLILPNRS) and 722 to 744 (GSMSEHGGPSSSRHLWSGNGDWL).

Belongs to the protein kinase superfamily. Ser/Thr protein kinase family. Autophosphorylated and phosphorylated by ACR4.

The protein resides in the cell membrane. The enzyme catalyses L-seryl-[protein] + ATP = O-phospho-L-seryl-[protein] + ADP + H(+). The catalysed reaction is L-threonyl-[protein] + ATP = O-phospho-L-threonyl-[protein] + ADP + H(+). Its function is as follows. Required during the differentiation of the protoderm into shoots epidermis and cuticle. The sequence is that of Receptor-like serine/threonine-protein kinase ALE2 (ALE2) from Arabidopsis thaliana (Mouse-ear cress).